The following is a 247-amino-acid chain: Lipoprotein-releasing system ATP-binding protein LolD 2 (247 aa).

One can recognise an ABC transporter domain in the interval leucine 19–glycine 247. Glycine 56–threonine 63 contributes to the ATP binding site.

The protein belongs to the ABC transporter superfamily. Lipoprotein translocase (TC 3.A.1.125) family. As to quaternary structure, the complex is composed of two ATP-binding proteins (LolD) and two transmembrane proteins (LolC and LolE).

Its subcellular location is the cell inner membrane. Part of the ABC transporter complex LolCDE involved in the translocation of mature outer membrane-directed lipoproteins, from the inner membrane to the periplasmic chaperone, LolA. Responsible for the formation of the LolA-lipoprotein complex in an ATP-dependent manner. The sequence is that of Lipoprotein-releasing system ATP-binding protein LolD 2 from Chlorobaculum tepidum (strain ATCC 49652 / DSM 12025 / NBRC 103806 / TLS) (Chlorobium tepidum).